The primary structure comprises 886 residues: Alanine--tRNA ligase (886 aa).

Residues His564, His568, Cys666, and His670 each coordinate Zn(2+).

The protein belongs to the class-II aminoacyl-tRNA synthetase family. Zn(2+) serves as cofactor.

The protein resides in the cytoplasm. It carries out the reaction tRNA(Ala) + L-alanine + ATP = L-alanyl-tRNA(Ala) + AMP + diphosphate. In terms of biological role, catalyzes the attachment of alanine to tRNA(Ala) in a two-step reaction: alanine is first activated by ATP to form Ala-AMP and then transferred to the acceptor end of tRNA(Ala). Also edits incorrectly charged Ser-tRNA(Ala) and Gly-tRNA(Ala) via its editing domain. The protein is Alanine--tRNA ligase of Prochlorococcus marinus (strain MIT 9312).